Here is a 266-residue protein sequence, read N- to C-terminus: Ribosomal RNA small subunit methyltransferase A (266 aa).

6 residues coordinate S-adenosyl-L-methionine: asparagine 10, isoleucine 12, glycine 37, glutamate 58, aspartate 82, and asparagine 105.

Belongs to the class I-like SAM-binding methyltransferase superfamily. rRNA adenine N(6)-methyltransferase family. RsmA subfamily.

Its subcellular location is the cytoplasm. It carries out the reaction adenosine(1518)/adenosine(1519) in 16S rRNA + 4 S-adenosyl-L-methionine = N(6)-dimethyladenosine(1518)/N(6)-dimethyladenosine(1519) in 16S rRNA + 4 S-adenosyl-L-homocysteine + 4 H(+). Functionally, specifically dimethylates two adjacent adenosines (A1518 and A1519) in the loop of a conserved hairpin near the 3'-end of 16S rRNA in the 30S particle. May play a critical role in biogenesis of 30S subunits. In Mycoplasma mycoides subsp. mycoides SC (strain CCUG 32753 / NCTC 10114 / PG1), this protein is Ribosomal RNA small subunit methyltransferase A.